The sequence spans 1706 residues: PR domain zinc finger protein 2 (1706 aa).

Residues 27–140 (EEVRLFPSAV…PGEELLVWYN (114 aa)) form the SET domain. The interval 154–342 (ERASARSKRS…TPPPHTPRAR (189 aa)) is disordered. A compositionally biased stretch (basic residues) spans 158-183 (ARSKRSSPKSRRGKKKSHENKNKGIR). The segment covering 185 to 199 (HPTQLKASELDSTFA) has biased composition (polar residues). Residues 258 to 294 (TDCEVNDVEEEELEEEEELEEEEEEELGEDGVEEADM) show a composition bias toward acidic residues. The segment covering 299–313 (SAKEPEIRCEEKPED) has biased composition (basic and acidic residues). C2H2-type zinc fingers lie at residues 355–377 (FPCQHCERKFATKQGLERHMHIH) and 385–407 (FKCKYCGKRFGTQINRRRHERRH). 3 disordered regions span residues 400–446 (RRRH…QLGQ), 492–542 (RRHQ…EEEG), and 618–655 (LLKDSPSSTNCESKKRRTASPPVLPKIKTETESDSTAP). A Phosphoserine modification is found at serine 416. Positions 427-439 (DGKGENVTSKDES) are enriched in basic and acidic residues. The segment at 476–499 (HPCKYCKKVFGTHTNMRRHQRRVH) adopts a C2H2-type 3 zinc-finger fold. At serine 637 the chain carries Phosphoserine. Residues lysine 645, lysine 684, and lysine 686 each participate in a glycyl lysine isopeptide (Lys-Gly) (interchain with G-Cter in SUMO2) cross-link. Disordered regions lie at residues 724-794 (TSSR…SPPC), 823-1075 (SGVK…SSVV), and 1088-1112 (VTFKQEESESEGLKPKEEAPPAGGQ). Over residues 733-743 (SSPPSSPQHSP) the composition is skewed to low complexity. Serine 738 carries the phosphoserine modification. Lysine 769 is covalently cross-linked (Glycyl lysine isopeptide (Lys-Gly) (interchain with G-Cter in SUMO2)). Phosphoserine occurs at positions 776, 780, and 791. Polar residues predominate over residues 823–832 (SGVKQKSEGT). A compositionally biased stretch (basic and acidic residues) spans 846 to 863 (SVHKKPCDSEGKEFKENH). Residues lysine 860 and lysine 870 each participate in a glycyl lysine isopeptide (Lys-Gly) (interchain with G-Cter in SUMO2) cross-link. 2 stretches are compositionally biased toward polar residues: residues 891–912 (SLPTETTPEVTRSPSPCKSPDT) and 943–952 (LQTASLSSGQ). The segment covering 962–983 (PSSPPPCPPVLTVATPPPPLLP) has biased composition (pro residues). Polar residues predominate over residues 993 to 1009 (DASPQQCPSPFSNTTAQ). The span at 1010 to 1019 (SPLPILSPTV) shows a compositional bias: low complexity. The segment covering 1020–1030 (SPSPSPIPPVE) has biased composition (pro residues). Low complexity predominate over residues 1034-1062 (SAASPGPPTLSSSSSSSSSFPSSSCSSTS). Positions 1091 to 1106 (KQEESESEGLKPKEEA) are enriched in basic and acidic residues. C2H2-type zinc fingers lie at residues 1123–1145 (FICNVCESPFLSIKDLTKHLSVH), 1151–1174 (FKCEFCVQLFKVKTDLSEHRFLLH), and 1180–1203 (FVCSVCKKEFAFLCNLQQHQRDLH). Residues lysine 1136 and lysine 1140 each participate in a glycyl lysine isopeptide (Lys-Gly) (interchain with G-Cter in SUMO2) cross-link. Positions 1218–1227 (LRPQNFTDPS) are enriched in polar residues. The disordered stretch occupies residues 1218–1251 (LRPQNFTDPSKANVEHMPSLPEEPLETSREEELN). Lysine 1269 participates in a covalent cross-link: Glycyl lysine isopeptide (Lys-Gly) (interchain with G-Cter in SUMO2). The C2H2-type 7; atypical zinc-finger motif lies at 1321–1343 (IRCTKCGKGVDNMPELHKHILAC). The segment at 1443–1465 (HICPYCDREFTYIGSLNKHAAFS) adopts a C2H2-type 8; atypical zinc-finger fold. The segment at 1466–1563 (CPKKPLSPSK…KKASSSSLRN (98 aa)) is disordered. Positions 1474–1486 (SKRKVSHSSKKGG) are enriched in basic residues. Over residues 1487-1498 (HASSSSSDRNSS) the composition is skewed to low complexity. Residues 1528 to 1544 (GPAQASLPSSSFRSRQN) are compositionally biased toward polar residues. The span at 1548–1563 (AASVKSKKASSSSLRN) shows a compositional bias: low complexity.

This sequence belongs to the class V-like SAM-binding methyltransferase superfamily. As to quaternary structure, binds to the retinoblastoma protein (RB). Interacts with GATA3.

Its subcellular location is the nucleus. It catalyses the reaction L-lysyl-[histone] + S-adenosyl-L-methionine = N(6)-methyl-L-lysyl-[histone] + S-adenosyl-L-homocysteine + H(+). The enzyme catalyses L-lysyl(9)-[histone H3] + 3 S-adenosyl-L-methionine = N(6),N(6),N(6)-trimethyl-L-lysyl(9)-[histone H3] + 3 S-adenosyl-L-homocysteine + 3 H(+). S-adenosyl-L-methionine-dependent histone methyltransferase that specifically methylates 'Lys-9' of histone H3. May function as a DNA-binding transcription factor. Binds to the macrophage-specific TPA-responsive element (MTE) of the HMOX1 (heme oxygenase 1) gene and may act as a transcriptional activator of this gene. This Rattus norvegicus (Rat) protein is PR domain zinc finger protein 2 (Prdm2).